A 250-amino-acid polypeptide reads, in one-letter code: Putative beta-carotene-binding protein (250 aa).

As to expression, deposited in the epidermis and cuticle of male locusts during their sexual maturation.

Has beta-carotene-binding activity. May be involved in the transport of carotenes from internal tissues to epidermis and cuticle of the locust. The chain is Putative beta-carotene-binding protein from Schistocerca gregaria (Desert locust).